Reading from the N-terminus, the 69-residue chain is DNA gyrase inhibitor YacG (69 aa).

Cysteine 7, cysteine 10, cysteine 26, and cysteine 30 together coordinate Zn(2+).

It belongs to the DNA gyrase inhibitor YacG family. In terms of assembly, interacts with GyrB. Zn(2+) is required as a cofactor.

Its function is as follows. Inhibits all the catalytic activities of DNA gyrase by preventing its interaction with DNA. Acts by binding directly to the C-terminal domain of GyrB, which probably disrupts DNA binding by the gyrase. The sequence is that of DNA gyrase inhibitor YacG from Shewanella sp. (strain ANA-3).